We begin with the raw amino-acid sequence, 285 residues long: Protoheme IX farnesyltransferase (285 aa).

9 helical membrane passes run 13–33 (LGKL…AFLA), 40–60 (LLPI…AMII), 89–109 (EAII…FIDN), 110–130 (ILTA…YTIL), 137–157 (LNIV…YTSL), 165–185 (GFLL…SLAL), 194–214 (AHYP…AIAI), 230–252 (INLI…SYRL), and 265–285 (FIFS…VKLI).

This sequence belongs to the UbiA prenyltransferase family. Protoheme IX farnesyltransferase subfamily.

The protein localises to the cell membrane. The catalysed reaction is heme b + (2E,6E)-farnesyl diphosphate + H2O = Fe(II)-heme o + diphosphate. It functions in the pathway porphyrin-containing compound metabolism; heme O biosynthesis; heme O from protoheme: step 1/1. Functionally, converts heme B (protoheme IX) to heme O by substitution of the vinyl group on carbon 2 of heme B porphyrin ring with a hydroxyethyl farnesyl side group. This is Protoheme IX farnesyltransferase from Saccharolobus islandicus (strain Y.N.15.51 / Yellowstone #2) (Sulfolobus islandicus).